A 155-amino-acid chain; its full sequence is Interleukin-2 (155 aa).

An N-terminal signal peptide occupies residues 1–20 (MYKIQLLSCIALTLALVANG). A glycan (O-linked (GalNAc...) threonine) is linked at Thr-23. Cysteines 79 and 127 form a disulfide.

It belongs to the IL-2 family.

The protein localises to the secreted. Its function is as follows. Cytokine produced by activated CD4-positive helper T-cells and to a lesser extend activated CD8-positive T-cells and natural killer (NK) cells that plays pivotal roles in the immune response and tolerance. Binds to a receptor complex composed of either the high-affinity trimeric IL-2R (IL2RA/CD25, IL2RB/CD122 and IL2RG/CD132) or the low-affinity dimeric IL-2R (IL2RB and IL2RG). Interaction with the receptor leads to oligomerization and conformation changes in the IL-2R subunits resulting in downstream signaling starting with phosphorylation of JAK1 and JAK3. In turn, JAK1 and JAK3 phosphorylate the receptor to form a docking site leading to the phosphorylation of several substrates including STAT5. This process leads to activation of several pathways including STAT, phosphoinositide-3-kinase/PI3K and mitogen-activated protein kinase/MAPK pathways. Functions as a T-cell growth factor and can increase NK-cell cytolytic activity as well. Promotes strong proliferation of activated B-cells and subsequently immunoglobulin production. Plays a pivotal role in regulating the adaptive immune system by controlling the survival and proliferation of regulatory T-cells, which are required for the maintenance of immune tolerance. Moreover, participates in the differentiation and homeostasis of effector T-cell subsets, including Th1, Th2, Th17 as well as memory CD8-positive T-cells. This Ovis aries (Sheep) protein is Interleukin-2 (IL2).